A 339-amino-acid chain; its full sequence is MLFLQLPLLLVLLPGGDSEEGFQEPISFQIIWISSFYNRSWEEEVCSAWLGELQTHRREGKSDIVIYRQPWSKGNFSREDLMESEHILRMFFVRFVQAFFNHASQWKLEYPFDVQIAGGCDLYHGETSVGFVRIAYQGSDFASFQNNSWLPSPKGGTRAQLVCKLFNLYQGTLEIIHKLLSDTCPRFVLGLLDAGKADLQRQVRPEAWLSSGPNPSPGHLMLVCHVSGFYPKPIWVMWMRDEQEQPGTQQGDILPNADGTWYLRVTLDVAAGEASGLSCRVKHSSLGGQDIILYWEQHSSVGWILLAVIVPLVLLTGLAFWHRKHWKHCDPSSALHRLE.

Residues 1–18 (MLFLQLPLLLVLLPGGDS) form the signal peptide. The Extracellular portion of the chain corresponds to 19 to 300 (EEGFQEPISF…IILYWEQHSS (282 aa)). 2 N-linked (GlcNAc...) asparagine glycosylation sites follow: N38 and N75. 91-95 (FFVRF) lines the a D-galactosylceramide pocket. Disulfide bonds link C120–C184 and C224–C279. A glycan (N-linked (GlcNAc...) asparagine) is linked at N146. An Ig-like domain is found at 185–295 (PRFVLGLLDA…LGGQDIILYW (111 aa)). The helical transmembrane segment at 301–321 (VGWILLAVIVPLVLLTGLAFW) threads the bilayer. Topologically, residues 322–339 (HRKHWKHCDPSSALHRLE) are cytoplasmic.

In terms of assembly, heterodimer with B2M (beta-2-microglobulin). Interacts with CD74.

Its subcellular location is the cell membrane. It localises to the membrane raft. The protein localises to the endosome membrane. Antigen-presenting protein that binds self and non-self lipid and glycolipid antigens and presents them to T-cell receptors on natural killer T-cells. In Sus scrofa (Pig), this protein is T-cell surface glycoprotein CD1a (CD1A).